The primary structure comprises 328 residues: Homeobox protein Hox-D1 (328 aa).

The Antp-type hexapeptide motif lies at 204 to 209 (TFEWMK). The segment at residues 229–288 (SSAIRTNFSTKQLTELEKEFHFNKYLTRARRIEIANCLHLNDTQVKIWFQNRRMKQKKRE) is a DNA-binding region (homeobox). The segment at 305 to 328 (PLSGTTPTKFIKNPGSPSQSQEPS) is disordered. The segment covering 319–328 (GSPSQSQEPS) has biased composition (polar residues).

It belongs to the Antp homeobox family. Labial subfamily.

The protein resides in the nucleus. Its function is as follows. Sequence-specific transcription factor which is part of a developmental regulatory system that provides cells with specific positional identities on the anterior-posterior axis. Acts on the anterior body structures. This Homo sapiens (Human) protein is Homeobox protein Hox-D1 (HOXD1).